Consider the following 124-residue polypeptide: Fluoride-specific ion channel FluC (124 aa).

4 helical membrane-spanning segments follow: residues 4–24, 35–55, 60–80, and 95–115; these read VLLV…ISIF, FGTL…YALG, ISPE…TTFS, and WLKA…MVYL. Residues Gly74 and Thr77 each coordinate Na(+).

It belongs to the fluoride channel Fluc/FEX (TC 1.A.43) family.

It localises to the cell inner membrane. It carries out the reaction fluoride(in) = fluoride(out). Its activity is regulated as follows. Na(+) is not transported, but it plays an essential structural role and its presence is essential for fluoride channel function. In terms of biological role, fluoride-specific ion channel. Important for reducing fluoride concentration in the cell, thus reducing its toxicity. This chain is Fluoride-specific ion channel FluC, found in Shewanella putrefaciens (strain CN-32 / ATCC BAA-453).